The sequence spans 472 residues: Selenium-binding protein 2 (472 aa).

Serine 467 bears the Phosphoserine mark.

Belongs to the selenium-binding protein family. The N-terminus is blocked. In terms of tissue distribution, mainly expressed in liver.

It is found in the nucleus. The protein localises to the cytoplasm. It localises to the cytosol. Its subcellular location is the membrane. Functionally, selenium- and acetaminophen-binding protein which may be involved in the sensing of reactive xenobiotics in the cytoplasm. May be involved in intra-Golgi protein transport. This chain is Selenium-binding protein 2 (Selenbp2), found in Mus musculus (Mouse).